A 382-amino-acid polypeptide reads, in one-letter code: Gas vesicle protein C1 (382 aa).

Residues 1-18 show a composition bias toward basic and acidic residues; it reads MSVTDKRDEMSTARDKFA. Residues 1 to 21 are disordered; that stretch reads MSVTDKRDEMSTARDKFAESQ. A run of 7 repeats spans residues 22–60, 61–92, 93–130, 131–168, 169–200, 201–240, and 241–284. Residues 22–284 are 7 X approximate tandem repeats; the sequence is QEFESYADEF…VEAEAEVSPD (263 aa). The segment covering 260 to 302 has biased composition (acidic residues); the sequence is GAAEAEAEPVEADADVEAEAEVSPDEAGGESAGTEEEETEPAE. The disordered stretch occupies residues 260-382; it reads GAAEAEAEPV…DVPLRPDDKT (123 aa). Low complexity predominate over residues 303 to 316; sequence VETAAPEVEGSPAD. Residues 317-336 are compositionally biased toward acidic residues; that stretch reads TADEAEDTEAEEETEEEAPE. Positions 365–382 are enriched in basic and acidic residues; that stretch reads EYRDEYGEDVPLRPDDKT.

This sequence belongs to the halobacterial gas vesicle GvpC family. Forms homodimers, interacts with GvpF1, GvpH1, GvpI1, GvpL1, GvpN1 and GvpO1 via its C-terminus (residues 329-382).

The protein localises to the gas vesicle. Its subcellular location is the cytoplasm. Confers stability, involved in shaping gas vesicles. Gas vesicles are hollow, gas filled proteinaceous nanostructures found in several microbial planktonic microorganisms. They allow positioning of halobacteria at the optimal depth for growth in the poorly aerated, shallow brine pools of their habitat. In terms of biological role, expression of a 9.5 kb p-vac DNA fragment containing 2 divergently transcribed regions (gvpD-gvpE-gvpF-gvpG-gvpH-gvpI-gvpJ-gvpK-gvpL-gvpM and gvpA-gvpC-gvpN-gvpO) allows H.volcanii to produce gas vesicles. A similar region restores gas vesicle production in H.halobium without the p-vac locus, but it still has the c-vac locus. The sequence is that of Gas vesicle protein C1 (gvpC1) from Halobacterium salinarum (strain ATCC 700922 / JCM 11081 / NRC-1) (Halobacterium halobium).